Reading from the N-terminus, the 322-residue chain is Quinolinate synthase (322 aa).

2 residues coordinate iminosuccinate: His-38 and Ser-55. Cys-100 is a [4Fe-4S] cluster binding site. Residues 126–128 (YIN) and Ser-143 each bind iminosuccinate. Residue Cys-186 participates in [4Fe-4S] cluster binding. Residues 212-214 (HPE) and Thr-229 each bind iminosuccinate. Cys-279 is a binding site for [4Fe-4S] cluster.

This sequence belongs to the quinolinate synthase family. Type 2 subfamily. The cofactor is [4Fe-4S] cluster.

The protein resides in the cytoplasm. The catalysed reaction is iminosuccinate + dihydroxyacetone phosphate = quinolinate + phosphate + 2 H2O + H(+). The protein operates within cofactor biosynthesis; NAD(+) biosynthesis; quinolinate from iminoaspartate: step 1/1. Its function is as follows. Catalyzes the condensation of iminoaspartate with dihydroxyacetone phosphate to form quinolinate. The protein is Quinolinate synthase of Aquifex aeolicus (strain VF5).